A 344-amino-acid chain; its full sequence is Thioredoxin reductase FGSG_00043 (344 aa).

FAD-binding positions include 12 to 15 (GGPA), 34 to 39 (DSVSYR), His-51, and Ala-121. Residues Cys-165 and Cys-168 are joined by a disulfide bond. FAD contacts are provided by residues Asp-314 and 321-322 (FV).

This sequence belongs to the class-II pyridine nucleotide-disulfide oxidoreductase family. In terms of assembly, homodimer. It depends on FAD as a cofactor.

It participates in mycotoxin biosynthesis. Its function is as follows. Thioredoxin reductase; part of the gene cluster that mediates the biosynthesis of gramillins A and B, bicyclic lipopeptides that induce cell death in maize leaves but not in wheat leaves. The nonribosomal peptide synthetase GRA1 incorporates respectively a glutamic adic (Glu), a leucine (Leu), a serine (Ser), a hydroxyglutamine (HOGln), a 2-amino decanoic acid, and 2 cysteins (CysB and CysA). The biosynthesis of 2-amino decanoic acid incorporated in gramillins could be initiated by a fatty acid synthase composed of the alpha and beta subunits FGSG_00036 and FGSG_11656. The cytochrome P450 monooxygenase FGSG_15680 could hydroxylate the fatty acid chain. Subsequent oxidation to the ketone by the oxidoreductase FGSG_00048 and transamination by aminotransferase FGSG_00049 could form 2-amino-decanoic acid. On the other hand, FGSG_15680 could also be responsible for the HO-modified glutamine at the gamma-position. Whether hydroxylation occurs on the fully assembled product or on the Gln residue prior to assembly into the gramillins requires further proof. The thioredoxin FGSG_00043 could also be required for the disulfide-bond formation between CysA and CysB. The specific involvement of the remaining proteins from the cluster is more difficult to discern, but could have broader regulatory (FGSG_00040 and FGSG_11657) or enzymatic functions (FGSG_00044 and FGSG_00045). The final C-domain of GRA1 does not possess the expected sequence of a termination CT domain, often implicated in macrocyclization and release of a cyclopeptidein fungal NRPs; and the thioesterase FGSG_00047 may act in concert with the terminal C-domain of GRA1 to catalyze the formation of the macrocyclic anhydride and release of the products. In Gibberella zeae (strain ATCC MYA-4620 / CBS 123657 / FGSC 9075 / NRRL 31084 / PH-1) (Wheat head blight fungus), this protein is Thioredoxin reductase FGSG_00043.